The sequence spans 274 residues: Thiamine kinase (274 aa).

Belongs to the thiamine kinase family.

The enzyme catalyses thiamine + ATP = thiamine phosphate + ADP + H(+). Its pathway is cofactor biosynthesis; thiamine diphosphate biosynthesis; thiamine phosphate from thiamine: step 1/1. Catalyzes the ATP-dependent phosphorylation of thiamine to thiamine phosphate. Is involved in thiamine salvage. The chain is Thiamine kinase from Salmonella dublin (strain CT_02021853).